The following is a 249-amino-acid chain: Proteasome subunit alpha type-4 (249 aa).

Belongs to the peptidase T1A family. As to quaternary structure, the 26S proteasome consists of a 20S proteasome core and two 19S regulatory subunits. The 20S proteasome core is composed of 28 subunits that are arranged in four stacked rings, resulting in a barrel-shaped structure. The two end rings are each formed by seven alpha subunits, and the two central rings are each formed by seven beta subunits. The catalytic chamber with the active sites is on the inside of the barrel.

It localises to the cytoplasm. It is found in the nucleus. In terms of biological role, the proteasome is a multicatalytic proteinase complex which is characterized by its ability to cleave peptides with Arg, Phe, Tyr, Leu, and Glu adjacent to the leaving group at neutral or slightly basic pH. The proteasome has an ATP-dependent proteolytic activity. This is Proteasome subunit alpha type-4 (PAC1) from Petunia hybrida (Petunia).